A 151-amino-acid polypeptide reads, in one-letter code: Large ribosomal subunit protein uL15 (151 aa).

The interval 1–57 (MTLRLDSLKANKGARRRKLRKGRGIAAGQGASCGFGMRGQKSRSGRPTRPGFEGGQM) is disordered. The span at 12 to 23 (KGARRRKLRKGR) shows a compositional bias: basic residues. Over residues 25–37 (IAAGQGASCGFGM) the composition is skewed to gly residues.

Belongs to the universal ribosomal protein uL15 family. In terms of assembly, part of the 50S ribosomal subunit.

Binds to the 23S rRNA. The protein is Large ribosomal subunit protein uL15 of Synechococcus sp. (strain CC9902).